The following is a 415-amino-acid chain: Phosphoribosylamine--glycine ligase (415 aa).

The ATP-grasp domain maps to lysine 108–glutamate 311. Isoleucine 134–serine 191 is a binding site for ATP. Residues glutamate 281 and asparagine 283 each contribute to the Mg(2+) site.

It belongs to the GARS family. The cofactor is Mg(2+). It depends on Mn(2+) as a cofactor.

The enzyme catalyses 5-phospho-beta-D-ribosylamine + glycine + ATP = N(1)-(5-phospho-beta-D-ribosyl)glycinamide + ADP + phosphate + H(+). Its pathway is purine metabolism; IMP biosynthesis via de novo pathway; N(1)-(5-phospho-D-ribosyl)glycinamide from 5-phospho-alpha-D-ribose 1-diphosphate: step 2/2. This Staphylococcus aureus (strain Mu50 / ATCC 700699) protein is Phosphoribosylamine--glycine ligase.